Reading from the N-terminus, the 159-residue chain is Transcription elongation factor GreA (159 aa).

The stretch at 44-75 (SENAEYDAAREQQSQTEARIADLENKLSTATI) forms a coiled coil.

It belongs to the GreA/GreB family.

In terms of biological role, necessary for efficient RNA polymerase transcription elongation past template-encoded arresting sites. The arresting sites in DNA have the property of trapping a certain fraction of elongating RNA polymerases that pass through, resulting in locked ternary complexes. Cleavage of the nascent transcript by cleavage factors such as GreA or GreB allows the resumption of elongation from the new 3'terminus. GreA releases sequences of 2 to 3 nucleotides. This Chlorobium limicola (strain DSM 245 / NBRC 103803 / 6330) protein is Transcription elongation factor GreA.